The sequence spans 401 residues: Argininosuccinate synthase (401 aa).

Residues 10–18 (AYSGGLDTS) and alanine 37 each bind ATP. Residue tyrosine 89 participates in L-citrulline binding. Glycine 119 serves as a coordination point for ATP. L-aspartate is bound by residues threonine 121, asparagine 125, and aspartate 126. An L-citrulline-binding site is contributed by asparagine 125. The L-citrulline site is built by arginine 129, serine 178, serine 187, glutamate 263, and tyrosine 275.

Belongs to the argininosuccinate synthase family. Type 1 subfamily. In terms of assembly, homotetramer.

The protein resides in the cytoplasm. The enzyme catalyses L-citrulline + L-aspartate + ATP = 2-(N(omega)-L-arginino)succinate + AMP + diphosphate + H(+). It functions in the pathway amino-acid biosynthesis; L-arginine biosynthesis; L-arginine from L-ornithine and carbamoyl phosphate: step 2/3. The protein is Argininosuccinate synthase of Buchnera aphidicola subsp. Schizaphis graminum (strain Sg).